Reading from the N-terminus, the 261-residue chain is Segregation and condensation protein A (261 aa).

It belongs to the ScpA family. In terms of assembly, component of a cohesin-like complex composed of ScpA, ScpB and the Smc homodimer, in which ScpA and ScpB bind to the head domain of Smc. The presence of the three proteins is required for the association of the complex with DNA.

Its subcellular location is the cytoplasm. Functionally, participates in chromosomal partition during cell division. May act via the formation of a condensin-like complex containing Smc and ScpB that pull DNA away from mid-cell into both cell halves. In Ligilactobacillus salivarius (strain UCC118) (Lactobacillus salivarius), this protein is Segregation and condensation protein A.